The primary structure comprises 176 residues: UPF0098 protein Rv2140c (176 aa).

The residue at position 2 (Thr-2) is an N-acetylthreonine.

It belongs to the UPF0098 family.

This chain is UPF0098 protein Rv2140c, found in Mycobacterium tuberculosis (strain ATCC 25618 / H37Rv).